A 407-amino-acid polypeptide reads, in one-letter code: Probable NADPH dehydrogenase (407 aa).

2 residues coordinate FMN: T49 and Q124. Position 201–204 (201–204 (HGAH)) interacts with substrate. Y206 serves as the catalytic Proton donor. The FMN site is built by R254 and R357.

The protein belongs to the NADH:flavin oxidoreductase/NADH oxidase family. FMN serves as cofactor.

It catalyses the reaction A + NADPH + H(+) = AH2 + NADP(+). In terms of biological role, oxidoreductase that binds mammalian estrogens with high affinity. This chain is Probable NADPH dehydrogenase, found in Candida albicans (Yeast).